We begin with the raw amino-acid sequence, 356 residues long: Histidinol-phosphate aminotransferase (356 aa).

At lysine 211 the chain carries N6-(pyridoxal phosphate)lysine.

This sequence belongs to the class-II pyridoxal-phosphate-dependent aminotransferase family. Histidinol-phosphate aminotransferase subfamily. As to quaternary structure, homodimer. Pyridoxal 5'-phosphate serves as cofactor.

It catalyses the reaction L-histidinol phosphate + 2-oxoglutarate = 3-(imidazol-4-yl)-2-oxopropyl phosphate + L-glutamate. It participates in amino-acid biosynthesis; L-histidine biosynthesis; L-histidine from 5-phospho-alpha-D-ribose 1-diphosphate: step 7/9. This is Histidinol-phosphate aminotransferase from Aeromonas hydrophila subsp. hydrophila (strain ATCC 7966 / DSM 30187 / BCRC 13018 / CCUG 14551 / JCM 1027 / KCTC 2358 / NCIMB 9240 / NCTC 8049).